A 324-amino-acid chain; its full sequence is Delta-aminolevulinic acid dehydratase (324 aa).

The Zn(2+) site is built by Cys120, Cys122, and Cys130. The active-site Schiff-base intermediate with substrate is Lys195. 5-aminolevulinate contacts are provided by Arg205 and Arg217. Glu233 provides a ligand contact to Mg(2+). Lys248 (schiff-base intermediate with substrate) is an active-site residue. Residues Ser274 and Tyr313 each coordinate 5-aminolevulinate.

It belongs to the ALAD family. In terms of assembly, homooctamer. Zn(2+) serves as cofactor.

The catalysed reaction is 2 5-aminolevulinate = porphobilinogen + 2 H2O + H(+). The protein operates within porphyrin-containing compound metabolism; protoporphyrin-IX biosynthesis; coproporphyrinogen-III from 5-aminolevulinate: step 1/4. In terms of biological role, catalyzes an early step in the biosynthesis of tetrapyrroles. Binds two molecules of 5-aminolevulinate per subunit, each at a distinct site, and catalyzes their condensation to form porphobilinogen. In Bacillus subtilis (strain 168), this protein is Delta-aminolevulinic acid dehydratase (hemB).